Reading from the N-terminus, the 329-residue chain is Ketol-acid reductoisomerase (NADP(+)) (329 aa).

The region spanning 2–181 (MKKYYESDAD…GATRAVVLET (180 aa)) is the KARI N-terminal Rossmann domain. Residues 25–28 (YGSQ), Arg-48, Ser-52, and 82–85 (DELQ) each bind NADP(+). Residue His-107 is part of the active site. Gly-133 contributes to the NADP(+) binding site. The 146-residue stretch at 182–327 (TFREETETDL…KEVRAMMPQF (146 aa)) folds into the KARI C-terminal knotted domain. Mg(2+) is bound by residues Asp-190, Glu-194, Glu-226, and Glu-230. Ser-251 contributes to the substrate binding site.

The protein belongs to the ketol-acid reductoisomerase family. Mg(2+) is required as a cofactor.

The enzyme catalyses (2R)-2,3-dihydroxy-3-methylbutanoate + NADP(+) = (2S)-2-acetolactate + NADPH + H(+). The catalysed reaction is (2R,3R)-2,3-dihydroxy-3-methylpentanoate + NADP(+) = (S)-2-ethyl-2-hydroxy-3-oxobutanoate + NADPH + H(+). The protein operates within amino-acid biosynthesis; L-isoleucine biosynthesis; L-isoleucine from 2-oxobutanoate: step 2/4. It functions in the pathway amino-acid biosynthesis; L-valine biosynthesis; L-valine from pyruvate: step 2/4. Involved in the biosynthesis of branched-chain amino acids (BCAA). Catalyzes an alkyl-migration followed by a ketol-acid reduction of (S)-2-acetolactate (S2AL) to yield (R)-2,3-dihydroxy-isovalerate. In the isomerase reaction, S2AL is rearranged via a Mg-dependent methyl migration to produce 3-hydroxy-3-methyl-2-ketobutyrate (HMKB). In the reductase reaction, this 2-ketoacid undergoes a metal-dependent reduction by NADPH to yield (R)-2,3-dihydroxy-isovalerate. The polypeptide is Ketol-acid reductoisomerase (NADP(+)) (Methanoregula boonei (strain DSM 21154 / JCM 14090 / 6A8)).